The chain runs to 361 residues: Protein RecA (361 aa).

77–84 contacts ATP; that stretch reads GPESSGKT.

The protein belongs to the RecA family.

The protein resides in the cytoplasm. In terms of biological role, can catalyze the hydrolysis of ATP in the presence of single-stranded DNA, the ATP-dependent uptake of single-stranded DNA by duplex DNA, and the ATP-dependent hybridization of homologous single-stranded DNAs. It interacts with LexA causing its activation and leading to its autocatalytic cleavage. The chain is Protein RecA from Brucella abortus (strain S19).